Reading from the N-terminus, the 143-residue chain is Anti-sigma F factor (143 aa).

The protein belongs to the anti-sigma-factor family.

It catalyses the reaction L-seryl-[protein] + ATP = O-phospho-L-seryl-[protein] + ADP + H(+). The catalysed reaction is L-threonyl-[protein] + ATP = O-phospho-L-threonyl-[protein] + ADP + H(+). Binds to sigma F and blocks its ability to form an RNA polymerase holoenzyme (E-sigma F). Phosphorylates SpoIIAA on a serine residue. This phosphorylation may enable SpoIIAA to act as an anti-anti-sigma factor that counteracts SpoIIAB and thus releases sigma F from inhibition. This chain is Anti-sigma F factor, found in Caldanaerobacter subterraneus subsp. tengcongensis (strain DSM 15242 / JCM 11007 / NBRC 100824 / MB4) (Thermoanaerobacter tengcongensis).